Reading from the N-terminus, the 1039-residue chain is Pleckstrin homology domain-containing family G member 5 (1039 aa).

Disordered regions lie at residues 58–105 and 185–277; these read NVST…RRHT and PGDE…SSES. Composition is skewed to basic and acidic residues over residues 185 to 199 and 217 to 228; these read PGDE…KDSK and ERVDPQSRRESS. Residues 259 to 277 are compositionally biased toward low complexity; that stretch reads SSCSLPVGSSVGSSGSSES. A DH domain is found at 372-564; it reads HQQEAVWELL…ERFIHHVNTC (193 aa). A PH domain is found at 620–720; sequence QLLLEGSLRM…WVDTLYNAQN (101 aa). Disordered regions lie at residues 739–785 and 800–836; these read QHLQ…ASDG and TLSS…LLPL. Positions 744-757 are enriched in acidic residues; the sequence is LEEEEDEQEEEGEE. Composition is skewed to polar residues over residues 758-776 and 811-831; these read SGTS…SNSL and FSSQ…TPTS. T760 is modified (phosphothreonine). Residue S765 is modified to Phosphoserine. The residue at position 876 (T876) is a Phosphothreonine. A phosphoserine mark is found at S878, S903, and S908. The segment at 967-989 is disordered; sequence PLSESENRPSHKAGGPADSARRK.

As to quaternary structure, interacts with GIPC1/synectin and RHOA. In terms of tissue distribution, selectively expressed in cortical and hippocampal neurons with prominent expression in the cell bodies and dendrites. Weakly expressed in rat fad pad ECs (RFPECs).

The protein localises to the cytoplasm. It is found in the perinuclear region. It localises to the cell membrane. The protein resides in the cell junction. Its subcellular location is the cell projection. The protein localises to the lamellipodium. Functions as a guanine exchange factor (GEF) for RAB26 and thus regulates autophagy of synaptic vesicles in axon terminal of motoneurons. Involved in the control of neuronal cell differentiation. Plays a role in angiogenesis through regulation of endothelial cells chemotaxis. Also affects the migration, adhesion, and matrix/bone degradation in macrophages and osteoclasts. The chain is Pleckstrin homology domain-containing family G member 5 (Plekhg5) from Rattus norvegicus (Rat).